The sequence spans 149 residues: D-aminoacyl-tRNA deacylase (149 aa).

Residues 137-138 carry the Gly-cisPro motif, important for rejection of L-amino acids motif; sequence GP.

It belongs to the DTD family. As to quaternary structure, homodimer.

It is found in the cytoplasm. The catalysed reaction is glycyl-tRNA(Ala) + H2O = tRNA(Ala) + glycine + H(+). The enzyme catalyses a D-aminoacyl-tRNA + H2O = a tRNA + a D-alpha-amino acid + H(+). An aminoacyl-tRNA editing enzyme that deacylates mischarged D-aminoacyl-tRNAs. Also deacylates mischarged glycyl-tRNA(Ala), protecting cells against glycine mischarging by AlaRS. Acts via tRNA-based rather than protein-based catalysis; rejects L-amino acids rather than detecting D-amino acids in the active site. By recycling D-aminoacyl-tRNA to D-amino acids and free tRNA molecules, this enzyme counteracts the toxicity associated with the formation of D-aminoacyl-tRNA entities in vivo and helps enforce protein L-homochirality. In Desulfotalea psychrophila (strain LSv54 / DSM 12343), this protein is D-aminoacyl-tRNA deacylase.